Reading from the N-terminus, the 610-residue chain is UvrABC system protein C (610 aa).

Residues 13 to 91 form the GIY-YIG domain; that stretch reads HLPGVYRMYD…IKENQPKYNV (79 aa). Residues 201-236 form the UVR domain; that stretch reads GQVVEHLVQKMENAAQELDFEAAARFRDQIQSVRAV.

Belongs to the UvrC family. In terms of assembly, interacts with UvrB in an incision complex.

It localises to the cytoplasm. In terms of biological role, the UvrABC repair system catalyzes the recognition and processing of DNA lesions. UvrC both incises the 5' and 3' sides of the lesion. The N-terminal half is responsible for the 3' incision and the C-terminal half is responsible for the 5' incision. The chain is UvrABC system protein C from Actinobacillus pleuropneumoniae serotype 5b (strain L20).